A 323-amino-acid chain; its full sequence is Peroxidase 16 (323 aa).

An N-terminal signal peptide occupies residues 1-23; that stretch reads MKNQSSFSIVALLLIFFSSSVFA. Disulfide bonds link C34-C113, C67-C72, C119-C319, and C198-C230. H65 (proton acceptor) is an active-site residue. 5 residues coordinate Ca(2+): D66, V69, G71, D73, and S75. P161 is a binding site for substrate. H191 provides a ligand contact to heme b. T192 contacts Ca(2+). 3 residues coordinate Ca(2+): D243, S246, and D251.

This sequence belongs to the peroxidase family. Classical plant (class III) peroxidase subfamily. Requires heme b as cofactor. Ca(2+) serves as cofactor. Expressed in the whole plant, but preferentially in roots and leaves.

Its subcellular location is the secreted. It catalyses the reaction 2 a phenolic donor + H2O2 = 2 a phenolic radical donor + 2 H2O. In terms of biological role, removal of H(2)O(2), oxidation of toxic reductants, biosynthesis and degradation of lignin, suberization, auxin catabolism, response to environmental stresses such as wounding, pathogen attack and oxidative stress. These functions might be dependent on each isozyme/isoform in each plant tissue. In Arabidopsis thaliana (Mouse-ear cress), this protein is Peroxidase 16 (PER16).